Consider the following 515-residue polypeptide: MGLEALVPLAMIVAIFLLLVDLMHRHQRWAARYPPGPLPLPGLGNLLHVDFQNTPYCFDQLRRRFGDVFSLQLAWTPVVVLNGLAAVREAMVTRGEDTADRPPAPIYQVLGFGPRSQGVILSRYGPAWREQRRFSVSTLRNLGLGKKSLEQWVTEEAACLCAAFADQAGRPFRPNGLLDKAVSNVIASLTCGRRFEYDDPRFLRLLDLAQEGLKEESGFLREVLNAVPVLPHIPALAGKVLRFQKAFLTQLDELLTEHRMTWDPAQPPRDLTEAFLAKKEKAKGSPESSFNDENLRIVVGNLFLAGMVTTSTTLAWGLLLMILHLDVQRGRRVSPGCPIVGTHVCPVRVQQEIDDVIGQVRRPEMGDQAHMPCTTAVIHEVQHFGDIVPLGVTHMTSRDIEVQGFRIPKGTTLITNLSSVLKDEAVWKKPFRFHPEHFLDAQGHFVKPEAFLPFSAGRRACLGEPLARMELFLFFTSLLQHFSFSVAAGQPRPSHSRVVSFLVTPSPYELCAVPR.

Over Met1 to Gly2 the chain is Extracellular. The chain crosses the membrane as a helical span at residues Leu3–Met23. At His24 to Asn301 the chain is on the cytoplasmic side. A helical transmembrane segment spans residues Leu302 to Ile322. The Extracellular segment spans residues Leu323 to Arg515. Residue Asn416 is glycosylated (N-linked (GlcNAc...) asparagine). Position 461 (Cys461) interacts with heme.

This sequence belongs to the cytochrome P450 family. Heme serves as cofactor. In terms of tissue distribution, expressed in brain cortex (at protein level).

It is found in the membrane. Its subcellular location is the cytoplasm. The protein resides in the mitochondrion. The catalysed reaction is an organic molecule + reduced [NADPH--hemoprotein reductase] + O2 = an alcohol + oxidized [NADPH--hemoprotein reductase] + H2O + H(+). In terms of biological role, may be responsible for the metabolism of many drugs and environmental chemicals that it oxidizes. It may be involved in the metabolism of codeine to morphine. However, another study could not confirm it. This Homo sapiens (Human) protein is Cytochrome P450 2D7.